We begin with the raw amino-acid sequence, 346 residues long: RNA-directed DNA methylation 4 (346 aa).

N-acetylmethionine is present on M1. 3 stretches are compositionally biased toward acidic residues: residues 253-268 (FCDG…EDSN), 278-312 (PEEE…DDEE), and 323-332 (GDDEFDDYAE). A disordered region spans residues 253 to 346 (FCDGSDESDY…YSESDEEFES (94 aa)).

Belongs to the IWR1/SLC7A6OS family. In terms of assembly, interacts with NRPD1. Associates with Pol II and Pol V complexes.

Its function is as follows. Probable regulatory factor for several RNA polymerases. Effector involved in facilitation of Pol V transcription as RNA scaffold and recruitment of silencing complex to target genomic sites. This is RNA-directed DNA methylation 4 (RDM4) from Arabidopsis thaliana (Mouse-ear cress).